Here is a 797-residue protein sequence, read N- to C-terminus: Sodium/hydrogen exchanger 4 (797 aa).

Residues 1–13 (MGPAMFMAFRLWN) lie on the Cytoplasmic side of the membrane. An intramembrane region (name=A/M1) is located at residues 14-28 (WLLLLAVLTRSEATS). At 29–69 (YVNESSNPTAQQAPDARFAASSSDPDEGISVFELDYDYVQI) the chain is on the cytoplasmic side. The disordered stretch occupies residues 32 to 52 (ESSNPTAQQAPDARFAASSSD). The segment at residues 70–90 (PYEVTLWILLASLAKIGFHLY) is an intramembrane region (name=B/M2). The Cytoplasmic segment spans residues 91 to 94 (HRLP). Residues 95–114 (HLMPESCLLIIVGALVGGII) form a helical membrane-spanning segment. Residues 115 to 127 (FGTHHKSPPVMDS) lie on the Extracellular side of the membrane. The helical transmembrane segment at 128–148 (SIYFLYLLPPIVLESGYFMPT) threads the bilayer. Residues 149–154 (RPFFEN) lie on the Cytoplasmic side of the membrane. A helical membrane pass occupies residues 155–175 (IGSILWWAGLGALINAFGIGL). The Extracellular portion of the chain corresponds to 176 to 194 (SLYFICQIKAFGLGDINLL). The chain crosses the membrane as a helical span at residues 195–215 (HNLLFGSLISAVDPVAVLAVF). The Cytoplasmic portion of the chain corresponds to 216 to 226 (EEARVNEQLYM). The chain crosses the membrane as a helical span at residues 227–247 (MIFGEALLNDGISVVLYNILI). Residues 248–270 (AFTKMHKFEDIEAVDILAGCARF) are Extracellular-facing. Residues 271-291 (VIVGCGGVFFGIIFGFISAFI) traverse the membrane as a helical segment. At 292 to 304 (TRFTQNISAIEPL) the chain is on the cytoplasmic side. Residues 305-325 (IVFMFSYLSYLAAETLYLSGI) traverse the membrane as a helical segment. The Extracellular segment spans residues 326-352 (LAITACAVTMKKYVEENVSQTSYTTIK). The N-linked (GlcNAc...) asparagine glycan is linked to asparagine 342. A helical membrane pass occupies residues 353 to 373 (YFMKMLSSVSETLIFIFMGVS). The Cytoplasmic portion of the chain corresponds to 374-384 (TIGKNHEWNWA). Residues 385-405 (FICFTLLFCQIWRAISVFTLF) traverse the membrane as a helical segment. Over 406–420 (YVSNQFRTFPFSIKD) the chain is Extracellular. The name=L intramembrane region spans 421 to 441 (QFIIFYSGVRGAGSFSLAFLL). Residues 442-450 (PLSLFPRKK) lie on the Extracellular side of the membrane. The helical transmembrane segment at 451–471 (LFVTATLVVTYFTVFFQGITI) threads the bilayer. The Cytoplasmic segment spans residues 472–797 (GPLVRYLDVR…KSHSPLLHRK (326 aa)). The segment covering 759 to 769 (YDSGEQTEEET) has biased composition (acidic residues). Residues 759 to 797 (YDSGEQTEEETSAILSRWTAEHRHSTEHHKSHSPLLHRK) are disordered. Residues 783-797 (STEHHKSHSPLLHRK) show a composition bias toward basic residues.

This sequence belongs to the monovalent cation:proton antiporter 1 (CPA1) transporter (TC 2.A.36) family. In terms of assembly, homodimer; each protomer has one site for sodium and one site for proton binding. Interacts with CHP1 and CHP2. In terms of processing, may be phosphorylated. In terms of tissue distribution, expressed in kidney. Expressed in uterus and endometrial epithelial cells. Expressed in the inner segments of inner medullary collecting ducts (IMCD) in kidney. Expressed in AGTR1-positive neurons in organum vasculosum of the lamina terminalis (at protein level).

Its subcellular location is the basolateral cell membrane. It is found in the apical cell membrane. The protein localises to the zymogen granule membrane. It catalyses the reaction Na(+)(in) + H(+)(out) = Na(+)(out) + H(+)(in). It carries out the reaction Na(+)(out) + NH4(+)(in) = Na(+)(in) + NH4(+)(out). Up-regulated in response to high extracellular sodium concentration. Functionally, electroneutral antiporter that exchanges sodium for protons or ammonium ions at the basolateral membrane of epithelia to regulate cell volume and intracellular pH upon hypertonic conditions. As part of transcellular ammonia transport in renal tubules, mediates basolateral ammonium extrusion in the medullary thick ascending limb, regulating the corticopapillary ammonium gradient and overall renal acid excretion. Mediates sodium:proton exchange in gastric parietal cells secondary to cAMP-dependent acid secretion and hyperosmolarity. Possibly coupled to chloride:bicarbonate antiporter, enables loading of parietal cells with sodium and chloride ions to maintain cell volume and normal gastric acid secretion. Functions as a sodium sensor in neurons of organum vasculosum of the lamina terminalis where it regulates water intake in response to increased sodium concentration in body fluids. The sequence is that of Sodium/hydrogen exchanger 4 (Slc9a4) from Mus musculus (Mouse).